We begin with the raw amino-acid sequence, 710 residues long: Polyribonucleotide nucleotidyltransferase (710 aa).

Mg(2+) is bound by residues Asp486 and Asp492. The KH domain occupies 553–612; the sequence is PRIHTIKISVDKIKDVIGKGGSVIRALTEETGTTIEIEDDGTVKIAATDGDKAKFAIRRI. One can recognise an S1 motif domain in the interval 622 to 690; the sequence is GRIYNGKVTR…RQGRVRLSIK (69 aa). The tract at residues 690-710 is disordered; the sequence is KEAGEQAQPEAEAVPAAPEAE. Residues 694–710 show a composition bias toward low complexity; the sequence is EQAQPEAEAVPAAPEAE.

Belongs to the polyribonucleotide nucleotidyltransferase family. Component of the RNA degradosome, which is a multiprotein complex involved in RNA processing and mRNA degradation. Mg(2+) is required as a cofactor.

It is found in the cytoplasm. The catalysed reaction is RNA(n+1) + phosphate = RNA(n) + a ribonucleoside 5'-diphosphate. Its function is as follows. Involved in mRNA degradation. Catalyzes the phosphorolysis of single-stranded polyribonucleotides processively in the 3'- to 5'-direction. This is Polyribonucleotide nucleotidyltransferase from Erwinia tasmaniensis (strain DSM 17950 / CFBP 7177 / CIP 109463 / NCPPB 4357 / Et1/99).